The following is a 95-amino-acid chain: Aspartyl/glutamyl-tRNA(Asn/Gln) amidotransferase subunit C (95 aa).

The protein belongs to the GatC family. In terms of assembly, heterotrimer of A, B and C subunits.

The catalysed reaction is L-glutamyl-tRNA(Gln) + L-glutamine + ATP + H2O = L-glutaminyl-tRNA(Gln) + L-glutamate + ADP + phosphate + H(+). It catalyses the reaction L-aspartyl-tRNA(Asn) + L-glutamine + ATP + H2O = L-asparaginyl-tRNA(Asn) + L-glutamate + ADP + phosphate + 2 H(+). Allows the formation of correctly charged Asn-tRNA(Asn) or Gln-tRNA(Gln) through the transamidation of misacylated Asp-tRNA(Asn) or Glu-tRNA(Gln) in organisms which lack either or both of asparaginyl-tRNA or glutaminyl-tRNA synthetases. The reaction takes place in the presence of glutamine and ATP through an activated phospho-Asp-tRNA(Asn) or phospho-Glu-tRNA(Gln). The sequence is that of Aspartyl/glutamyl-tRNA(Asn/Gln) amidotransferase subunit C from Campylobacter concisus (strain 13826).